A 102-amino-acid polypeptide reads, in one-letter code: NADH-quinone oxidoreductase subunit K (102 aa).

Helical transmembrane passes span 4-24 (IPME…LVGL), 30-50 (MLFV…AFIV), and 62-82 (VMFL…LALL).

This sequence belongs to the complex I subunit 4L family. In terms of assembly, NDH-1 is composed of 14 different subunits. Subunits NuoA, H, J, K, L, M, N constitute the membrane sector of the complex.

It localises to the cell inner membrane. The enzyme catalyses a quinone + NADH + 5 H(+)(in) = a quinol + NAD(+) + 4 H(+)(out). NDH-1 shuttles electrons from NADH, via FMN and iron-sulfur (Fe-S) centers, to quinones in the respiratory chain. The immediate electron acceptor for the enzyme in this species is believed to be ubiquinone. Couples the redox reaction to proton translocation (for every two electrons transferred, four hydrogen ions are translocated across the cytoplasmic membrane), and thus conserves the redox energy in a proton gradient. The polypeptide is NADH-quinone oxidoreductase subunit K (Chromohalobacter salexigens (strain ATCC BAA-138 / DSM 3043 / CIP 106854 / NCIMB 13768 / 1H11)).